We begin with the raw amino-acid sequence, 190 residues long: Potassium-transporting ATPase KdpC subunit (190 aa).

A helical transmembrane segment spans residues 7 to 27; it reads PALLMLLVWTLITGVFYPVLV.

This sequence belongs to the KdpC family. The system is composed of three essential subunits: KdpA, KdpB and KdpC.

The protein localises to the cell inner membrane. Its function is as follows. Part of the high-affinity ATP-driven potassium transport (or Kdp) system, which catalyzes the hydrolysis of ATP coupled with the electrogenic transport of potassium into the cytoplasm. This subunit acts as a catalytic chaperone that increases the ATP-binding affinity of the ATP-hydrolyzing subunit KdpB by the formation of a transient KdpB/KdpC/ATP ternary complex. The sequence is that of Potassium-transporting ATPase KdpC subunit from Methylococcus capsulatus (strain ATCC 33009 / NCIMB 11132 / Bath).